The chain runs to 313 residues: Beta-ketoacyl-[acyl-carrier-protein] synthase III (313 aa).

Residues C112 and H238 contribute to the active site. The segment at 239 to 243 (QANIR) is ACP-binding. Residue N268 is part of the active site.

This sequence belongs to the thiolase-like superfamily. FabH family. As to quaternary structure, homodimer.

Its subcellular location is the cytoplasm. It carries out the reaction malonyl-[ACP] + acetyl-CoA + H(+) = 3-oxobutanoyl-[ACP] + CO2 + CoA. It functions in the pathway lipid metabolism; fatty acid biosynthesis. Its function is as follows. Catalyzes the condensation reaction of fatty acid synthesis by the addition to an acyl acceptor of two carbons from malonyl-ACP. Catalyzes the first condensation reaction which initiates fatty acid synthesis and may therefore play a role in governing the total rate of fatty acid production. Possesses both acetoacetyl-ACP synthase and acetyl transacylase activities. Its substrate specificity determines the biosynthesis of branched-chain and/or straight-chain of fatty acids. The sequence is that of Beta-ketoacyl-[acyl-carrier-protein] synthase III from Staphylococcus haemolyticus (strain JCSC1435).